The chain runs to 1385 residues: Kinesin-like protein KIF15 (1385 aa).

Residues 1 to 24 (MAPGCKSELRNVTNSHSNQPSNED) form a disordered region. Residues 10–21 (RNVTNSHSNQPS) are compositionally biased toward polar residues. The Kinesin motor domain maps to 26–363 (AIKVFVRIRP…LNFAQRAKLI (338 aa)). Residue 109-116 (GQTGSGKT) coordinates ATP. Residues 368–1385 (VVNEDTQGNV…NVFLKERKKE (1018 aa)) are a coiled coil. An N6-acetyllysine modification is found at Lys1007. Phosphoserine occurs at positions 1139 and 1167. Positions 1222–1243 (DMKRQGESSSQSRPDSQQLKNE) are disordered. Positions 1228-1241 (ESSSQSRPDSQQLK) are enriched in polar residues.

The protein belongs to the TRAFAC class myosin-kinesin ATPase superfamily. Kinesin family. KLP2 subfamily. In terms of assembly, interacts with MKI67 and TPX2. Expressed in sympathetic neurons.

It is found in the cytoplasm. It localises to the cytoskeleton. The protein resides in the spindle. Functionally, plus-end directed kinesin-like motor enzyme involved in mitotic spindle assembly. In Rattus norvegicus (Rat), this protein is Kinesin-like protein KIF15 (Kif15).